The sequence spans 539 residues: Glucose-6-phosphate isomerase (539 aa).

Residue E340 is the Proton donor of the active site. Active-site residues include H371 and K500.

This sequence belongs to the GPI family.

It localises to the cytoplasm. It carries out the reaction alpha-D-glucose 6-phosphate = beta-D-fructose 6-phosphate. It participates in carbohydrate biosynthesis; gluconeogenesis. It functions in the pathway carbohydrate degradation; glycolysis; D-glyceraldehyde 3-phosphate and glycerone phosphate from D-glucose: step 2/4. Its function is as follows. Catalyzes the reversible isomerization of glucose-6-phosphate to fructose-6-phosphate. The protein is Glucose-6-phosphate isomerase of Ruegeria pomeroyi (strain ATCC 700808 / DSM 15171 / DSS-3) (Silicibacter pomeroyi).